Reading from the N-terminus, the 1310-residue chain is Zinc finger protein 521 (1310 aa).

Residues 1–10 (MSRRKQAKPR) are compositionally biased toward basic residues. Residues 1–46 (MSRRKQAKPRSLKDPNCKLEDTSEDGESPDCKKRQEEGDELEEEEA) are disordered. The segment covering 11-21 (SLKDPNCKLED) has biased composition (basic and acidic residues). A C2H2-type 1; degenerate zinc finger spans residues 48–68 (HSCDSCLQVFESLSDITEHKI). Residues 82–106 (DPTCSWPASSPSSKDQASPIHGEGF) form a disordered region. Polar residues predominate over residues 87 to 97 (WPASSPSSKDQ). C2H2-type zinc fingers lie at residues 119 to 141 (YPCQ…EQSH), 147 to 169 (FKCT…IKLH), 175 to 197 (YHCS…LKTH), 203 to 225 (YKCA…MQVH), 247 to 270 (QKCS…AECH), 282 to 305 (LQCM…EQIH), and 311 to 333 (NSCN…MDSH). A C2H2-type 9; degenerate zinc finger spans residues 404–428 (YSCIYCSKQLFSSLAVLQIHLKTMH). C2H2-type zinc fingers lie at residues 436–459 (HICQ…KQVH), 476–499 (YQCN…RSSH), and 512–535 (FFCP…RQVH). The segment at 559 to 584 (YSCSYCTNSPIFNSVLKLNKHIKENH) adopts a C2H2-type 13; atypical zinc-finger fold. 7 consecutive C2H2-type zinc fingers follow at residues 633-655 (YICN…LKTH), 663-685 (LTCP…VTIH), 693-716 (YICE…LDMH), 721-744 (FRCT…AVKH), 751-774 (YRCT…KHNH), 782-804 (HKCI…ITTH), and 808-831 (YNCK…REKH). The C2H2-type 21; degenerate zinc finger occupies 885 to 907 (YGCDICGAAYTMESLLQNHQLRD). 3 consecutive C2H2-type zinc fingers follow at residues 929-951 (YKCN…MQTH), 958-980 (YMCP…KVTH), and 1019-1041 (FRCV…GTFH). The C2H2-type 25; degenerate zinc finger occupies 1064 to 1082 (YKCASCLKEFRSKQDLVKL). C2H2-type zinc fingers lie at residues 1138-1161 (TRCS…QTIH), 1194-1216 (YQCI…VANH), 1224-1246 (HECK…LIEH), 1255-1278 (FKCP…FSAH), and 1285-1308 (YDCA…MSQH).

This sequence belongs to the krueppel C2H2-type zinc-finger protein family.

It localises to the nucleus. Its function is as follows. Transcription factor that can both act as an activator or a repressor depending on the context. Involved in BMP signaling and in the regulation of the immature compartment of the hematopoietic system. This Xenopus laevis (African clawed frog) protein is Zinc finger protein 521 (znf521).